A 74-amino-acid polypeptide reads, in one-letter code: uncharacterized protein (74 aa).

Residues 25-62 (QQTIDRLAGLELRMKQLIRAIEVNNELLRTMQEQQNRV) adopt a coiled-coil conformation.

This is an uncharacterized protein from Bacillus subtilis (strain 168).